A 53-amino-acid polypeptide reads, in one-letter code: Ovomucoid (53 aa).

Residues 3 to 53 (VDCSEYPQPTCTTEHRPVCGSNNETYGNKCNFCNAVVKSNGTLTVSHFGKC) form the Kazal-like domain. Cystine bridges form between cysteine 5–cysteine 35, cysteine 13–cysteine 32, and cysteine 21–cysteine 53. N-linked (GlcNAc...) asparagine glycosylation occurs at asparagine 42.

The protein resides in the secreted. In Polyplectron bicalcaratum (Grey peacock-pheasant), this protein is Ovomucoid.